The sequence spans 371 residues: Fe(3+) ions import ATP-binding protein FbpC (371 aa).

An ABC transporter domain is found at 5-235 (IKIENAQKRY…PANLFVATFI (231 aa)). Residue 37 to 44 (GPSGCGKT) coordinates ATP.

This sequence belongs to the ABC transporter superfamily. Fe(3+) ion importer (TC 3.A.1.10) family. The complex is composed of two ATP-binding proteins (FbpC), two transmembrane proteins (FbpB) and a solute-binding protein (FbpA).

Its subcellular location is the cell inner membrane. The catalysed reaction is Fe(3+)(out) + ATP + H2O = Fe(3+)(in) + ADP + phosphate + H(+). Part of the ABC transporter complex FbpABC involved in Fe(3+) ions import. Responsible for energy coupling to the transport system. This Fusobacterium nucleatum subsp. nucleatum (strain ATCC 25586 / DSM 15643 / BCRC 10681 / CIP 101130 / JCM 8532 / KCTC 2640 / LMG 13131 / VPI 4355) protein is Fe(3+) ions import ATP-binding protein FbpC.